The following is a 399-amino-acid chain: Acetate kinase (399 aa).

N8 provides a ligand contact to Mg(2+). An ATP-binding site is contributed by K15. R89 is a binding site for substrate. D147 (proton donor/acceptor) is an active-site residue. Residues H207–G211, D284–R286, and G332–N336 contribute to the ATP site. E385 provides a ligand contact to Mg(2+).

It belongs to the acetokinase family. Homodimer. Mg(2+) is required as a cofactor. Requires Mn(2+) as cofactor.

It localises to the cytoplasm. The catalysed reaction is acetate + ATP = acetyl phosphate + ADP. Its pathway is metabolic intermediate biosynthesis; acetyl-CoA biosynthesis; acetyl-CoA from acetate: step 1/2. In terms of biological role, catalyzes the formation of acetyl phosphate from acetate and ATP. Can also catalyze the reverse reaction. This chain is Acetate kinase, found in Streptococcus mutans serotype c (strain ATCC 700610 / UA159).